Consider the following 128-residue polypeptide: Large ribosomal subunit protein uL24 (128 aa).

The segment at 105–128 (KAKSRQVGKEKGKYKEETIEKMQE) is disordered.

Belongs to the universal ribosomal protein uL24 family. Component of the large ribosomal subunit.

The protein localises to the cytoplasm. Component of the large ribosomal subunit. The ribosome is a large ribonucleoprotein complex responsible for the synthesis of proteins in the cell. The polypeptide is Large ribosomal subunit protein uL24 (RPL26) (Gallus gallus (Chicken)).